The primary structure comprises 281 residues: Probable endonuclease 4 (281 aa).

His69, His109, Glu145, Asp179, His182, His216, Asp229, His231, and Glu261 together coordinate Zn(2+).

This sequence belongs to the AP endonuclease 2 family. Requires Zn(2+) as cofactor.

The enzyme catalyses Endonucleolytic cleavage to 5'-phosphooligonucleotide end-products.. Functionally, endonuclease IV plays a role in DNA repair. It cleaves phosphodiester bonds at apurinic or apyrimidinic (AP) sites, generating a 3'-hydroxyl group and a 5'-terminal sugar phosphate. This Aeromonas hydrophila subsp. hydrophila (strain ATCC 7966 / DSM 30187 / BCRC 13018 / CCUG 14551 / JCM 1027 / KCTC 2358 / NCIMB 9240 / NCTC 8049) protein is Probable endonuclease 4.